Consider the following 604-residue polypeptide: Prostaglandin G/H synthase 2 (604 aa).

Residues 1–17 (MLARALLLCVALALGHA) form the signal peptide. Positions 18 to 55 (ANPCCSNPCQNRGVCMSVGFDQYQCDCTRTGFYGENCS) constitute an EGF-like domain. 4 cysteine pairs are disulfide-bonded: Cys21-Cys32, Cys22-Cys145, Cys26-Cys42, and Cys44-Cys54. Asn53 carries an N-linked (GlcNAc...) asparagine glycan. Substrate is bound at residue Arg106. Asn130 is a glycosylation site (N-linked (GlcNAc...) asparagine). His193 serves as the catalytic Proton acceptor. Tyr341 contributes to the substrate binding site. Residue Tyr371 is the For cyclooxygenase activity of the active site. His374 contributes to the heme b binding site. The N-linked (GlcNAc...) asparagine glycan is linked to Asn396. Cys526 carries the S-nitrosocysteine modification. A disulfide bridge connects residues Cys555 and Cys561. An N-linked (GlcNAc...) asparagine glycan is attached at Asn580.

It belongs to the prostaglandin G/H synthase family. In terms of assembly, homodimer. Requires heme b as cofactor. Post-translationally, S-nitrosylation by NOS2 (iNOS) activates enzyme activity. S-nitrosylation may take place on different Cys residues in addition to Cys-526.

The protein localises to the microsome membrane. Its subcellular location is the endoplasmic reticulum membrane. It localises to the nucleus inner membrane. It is found in the nucleus outer membrane. It catalyses the reaction (5Z,8Z,11Z,14Z)-eicosatetraenoate + AH2 + 2 O2 = prostaglandin H2 + A + H2O. The enzyme catalyses (5Z,8Z,11Z,14Z)-eicosatetraenoate + 2 O2 = prostaglandin G2. The catalysed reaction is prostaglandin G2 + AH2 = prostaglandin H2 + A + H2O. It carries out the reaction (5Z,8Z,11Z,14Z,17Z)-eicosapentaenoate + 2 O2 = prostaglandin G3. It catalyses the reaction prostaglandin G3 + AH2 = prostaglandin H3 + A + H2O. The enzyme catalyses (8Z,11Z,14Z)-eicosatrienoate + 2 O2 = prostaglandin G1. The catalysed reaction is prostaglandin G1 + AH2 = prostaglandin H1 + A + H2O. It carries out the reaction 2-(5Z,8Z,11Z,14Z)-eicosatetraenoyl-sn-glycero-3-phosphoethanolamine + 2 O2 = 2-(prostaglandin G2)-sn-glycero-3-phosphoethanolamine. It catalyses the reaction 2-(prostaglandin G2)-sn-glycero-3-phosphoethanolamine + AH2 = 2-(prostaglandin H2)-sn-glycero-3-phosphoethanolamine + A + H2O. The enzyme catalyses 2-(5Z,8Z,11Z,14Z)-eicosatetraenoyl-sn-glycero-3-phosphocholine + 2 O2 = 2-(prostaglandin G2)-sn-glycero-3-phosphocholine. The catalysed reaction is 2-(prostaglandin G2)-sn-glycero-3-phosphocholine + AH2 = 2-(prostaglandin H2)-sn-glycero-3-phosphocholine + A + H2O. It carries out the reaction (15S)-hydroperoxy-(5Z,8Z,11Z,13E)-eicosatetraenoate + AH2 = (15S)-hydroxy-(5Z,8Z,11Z,13E)-eicosatetraenoate + A + H2O. It catalyses the reaction 2-(5Z,8Z,11Z,14Z)-eicosatetraenoyl-sn-glycero-3-phosphocholine + AH2 + O2 = 2-[(15S)-hydroxy-(5Z,8Z,11Z,13E)-eicosatetraenoyl]-sn-glycero-3-phosphocholine + A + H2O. The enzyme catalyses 2-(5Z,8Z,11Z,14Z)-eicosatetraenoyl-sn-glycero-3-phosphocholine + AH2 + O2 = 2-[(15R)-hydroxy-(5Z,8Z,11Z,13E)-eicosatetraenoyl]-sn-glycero-3-phosphocholine + A + H2O. The catalysed reaction is 2-(5Z,8Z,11Z,14Z)-eicosatetraenoyl-sn-glycero-3-phosphocholine + AH2 + O2 = 2-[(11R)-hydroxy-(5Z,8Z,12E,14Z)-eicosatetraenoyl]-sn-glycero-3-phosphocholine + A + H2O. It carries out the reaction (9Z,12Z)-octadecadienoate + AH2 + O2 = 9-hydroxy-(10E,12Z)-octadecadienoate + A + H2O. It catalyses the reaction (9Z,12Z)-octadecadienoate + AH2 + O2 = 13-hydroxy-(9Z,11E)-octadecadienoate + A + H2O. The enzyme catalyses (5Z,8Z,11Z,14Z)-eicosatetraenoate + AH2 + O2 = (15R)-hydroxy-(5Z,8Z,11Z,13E)-eicosatetraenoate + A + H2O. The catalysed reaction is (5Z,8Z,11Z,14Z)-eicosatetraenoate + AH2 + O2 = (11R)-hydroxy-(5Z,8Z,12E,14Z)-eicosatetraenoate + A + H2O. It carries out the reaction (5Z,8Z,11Z,14Z,17Z)-eicosapentaenoate + AH2 + O2 = (11R)-hydroxy-(5Z,8Z,12E,14Z,17Z)-eicosapentaenoate + A + H2O. It catalyses the reaction (5Z,8Z,11Z,14Z,17Z)-eicosapentaenoate + AH2 + O2 = (18S)-hydroxy-(5Z,8Z,11Z,14Z,16E)-eicosapentaenoate + A + H2O. The enzyme catalyses (5Z,8Z,11Z,14Z,17Z)-eicosapentaenoate + AH2 + O2 = (18R)-hydroxy-(5Z,8Z,11Z,14Z,16E)-eicosapentaenoate + A + H2O. The catalysed reaction is (5Z,8Z,11Z,14Z,17Z)-eicosapentaenoate + AH2 + O2 = (15R)-hydroxy-(5Z,8Z,11Z,13E,17Z)-eicosapentaenoate + A + H2O. It carries out the reaction (5Z,8Z,11Z,14Z,17Z)-eicosapentaenoate + AH2 + O2 = (15S)-hydroxy-(5Z,8Z,11Z,13E,17Z)-eicosapentaenoate + A + H2O. It catalyses the reaction (7Z,10Z,13Z,16Z,19Z)-docosapentaenoate + AH2 + O2 = 13R-hydroxy-(7Z,10Z,14E,16Z,19Z)-docosapentaenoate + A + H2O. The enzyme catalyses (4Z,7Z,10Z,13Z,16Z,19Z)-docosahexaenoate + AH2 + O2 = 13-hydroxy-(4Z,7Z,10Z,14E,16Z,19Z)-docosahexaenoate + A + H2O. The catalysed reaction is (5S)-hydroxy-(6E,8Z,11Z,14Z)-eicosatetraenoate + AH2 + O2 = (5S,15R)-dihydroxy-(6E,8Z,11Z,13E)-eicosatetraenoate + A + H2O. It carries out the reaction (4Z,7Z,10Z,13Z,16Z,19Z)-docosahexaenoate + AH2 + O2 = 17R-hydroxy-(4Z,7Z,10Z,13Z,15E,19Z)-docosahexaenoate + A + H2O. It catalyses the reaction (5S)-hydroxy-(6E,8Z,11Z,14Z)-eicosatetraenoate + AH2 + O2 = (5S,15S)-dihydroxy-(6E,8Z,11Z,13E)-eicosatetraenoate + A + H2O. The enzyme catalyses (5S)-hydroxy-(6E,8Z,11Z,14Z)-eicosatetraenoate + AH2 + O2 = (5S,11R)-dihydroxy-(6E,8Z,12E,14Z)-eicosatetraenoate + A + H2O. The catalysed reaction is 2-(5Z,8Z,11Z,14Z-eicosatetraenoyl)-glycerol + 2 O2 = 2-glyceryl-prostaglandin G2. It carries out the reaction 2-glyceryl-prostaglandin G2 + AH2 = 2-glyceryl-prostaglandin H2 + A + H2O. It catalyses the reaction (5Z,8Z,11Z,14Z)-eicosatetraenoate + O2 = (15R)-hydroperoxy-(5Z,8Z,11Z,13E)-eicosatetraenoate. The enzyme catalyses (5Z,8Z,11Z,14Z)-eicosatetraenoate + O2 = 11R-hydroperoxy-(5Z,8Z,12E,14Z)-eicosatetraenoate. The catalysed reaction is (9Z,12Z)-octadecadienoate + AH2 + O2 = (9R)-hydroxy-(10E,12Z)-octadecadienoate + A + H2O. It carries out the reaction (9Z,12Z)-octadecadienoate + AH2 + O2 = (9S)-hydroxy-(10E,12Z)-octadecadienoate + A + H2O. It catalyses the reaction (9Z,12Z)-octadecadienoate + AH2 + O2 = (13S)-hydroxy-(9Z,11E)-octadecadienoate + A + H2O. The enzyme catalyses (9Z,12Z)-octadecadienoate + AH2 + O2 = (13R)-hydroxy-(9Z,11E)-octadecadienoate + A + H2O. Its pathway is lipid metabolism; prostaglandin biosynthesis. In terms of biological role, dual cyclooxygenase and peroxidase in the biosynthesis pathway of prostanoids, a class of C20 oxylipins mainly derived from arachidonate ((5Z,8Z,11Z,14Z)-eicosatetraenoate, AA, C20:4(n-6)), with a particular role in the inflammatory response. The cyclooxygenase activity oxygenates AA to the hydroperoxy endoperoxide prostaglandin G2 (PGG2), and the peroxidase activity reduces PGG2 to the hydroxy endoperoxide prostaglandin H2 (PGH2), the precursor of all 2-series prostaglandins and thromboxanes. This complex transformation is initiated by abstraction of hydrogen at carbon 13 (with S-stereochemistry), followed by insertion of molecular O2 to form the endoperoxide bridge between carbon 9 and 11 that defines prostaglandins. The insertion of a second molecule of O2 (bis-oxygenase activity) yields a hydroperoxy group in PGG2 that is then reduced to PGH2 by two electrons. Similarly catalyzes successive cyclooxygenation and peroxidation of dihomo-gamma-linoleate (DGLA, C20:3(n-6)) and eicosapentaenoate (EPA, C20:5(n-3)) to corresponding PGH1 and PGH3, the precursors of 1- and 3-series prostaglandins. In an alternative pathway of prostanoid biosynthesis, converts 2-arachidonoyl lysophopholipids to prostanoid lysophopholipids, which are then hydrolyzed by intracellular phospholipases to release free prostanoids. Metabolizes 2-arachidonoyl glycerol yielding the glyceryl ester of PGH2, a process that can contribute to pain response. Generates lipid mediators from n-3 and n-6 polyunsaturated fatty acids (PUFAs) via a lipoxygenase-type mechanism. Oxygenates PUFAs to hydroperoxy compounds and then reduces them to corresponding alcohols. Plays a role in the generation of resolution phase interaction products (resolvins) during both sterile and infectious inflammation. Metabolizes docosahexaenoate (DHA, C22:6(n-3)) to 17R-HDHA, a precursor of the D-series resolvins (RvDs). As a component of the biosynthetic pathway of E-series resolvins (RvEs), converts eicosapentaenoate (EPA, C20:5(n-3)) primarily to 18S-HEPE that is further metabolized by ALOX5 and LTA4H to generate 18S-RvE1 and 18S-RvE2. In vascular endothelial cells, converts docosapentaenoate (DPA, C22:5(n-3)) to 13R-HDPA, a precursor for 13-series resolvins (RvTs) shown to activate macrophage phagocytosis during bacterial infection. In activated leukocytes, contributes to oxygenation of hydroxyeicosatetraenoates (HETE) to diHETES (5,15-diHETE and 5,11-diHETE). Can also use linoleate (LA, (9Z,12Z)-octadecadienoate, C18:2(n-6)) as substrate and produce hydroxyoctadecadienoates (HODEs) in a regio- and stereospecific manner, being (9R)-HODE ((9R)-hydroxy-(10E,12Z)-octadecadienoate) and (13S)-HODE ((13S)-hydroxy-(9Z,11E)-octadecadienoate) its major products. During neuroinflammation, plays a role in neuronal secretion of specialized preresolving mediators (SPMs) 15R-lipoxin A4 that regulates phagocytic microglia. The protein is Prostaglandin G/H synthase 2 (PTGS2) of Equus caballus (Horse).